Here is a 327-residue protein sequence, read N- to C-terminus: Phosphate acyltransferase (327 aa).

Belongs to the PlsX family. In terms of assembly, homodimer. Probably interacts with PlsY.

It localises to the cytoplasm. The catalysed reaction is a fatty acyl-[ACP] + phosphate = an acyl phosphate + holo-[ACP]. The protein operates within lipid metabolism; phospholipid metabolism. Functionally, catalyzes the reversible formation of acyl-phosphate (acyl-PO(4)) from acyl-[acyl-carrier-protein] (acyl-ACP). This enzyme utilizes acyl-ACP as fatty acyl donor, but not acyl-CoA. The sequence is that of Phosphate acyltransferase from Mycoplasma mobile (strain ATCC 43663 / 163K / NCTC 11711) (Mesomycoplasma mobile).